The chain runs to 204 residues: Outer-membrane lipoprotein carrier protein (204 aa).

A signal peptide spans 1-21; the sequence is MKKIAIVGALLTSFVASSVWA. Positions 169 to 204 are disordered; the sequence is QRSSYQLKSQQNGAIDASKFTFTPPQGVTVDDQRNK. Residues 171–181 are compositionally biased toward polar residues; the sequence is SSYQLKSQQNG.

Belongs to the LolA family. As to quaternary structure, monomer.

The protein resides in the periplasm. Participates in the translocation of lipoproteins from the inner membrane to the outer membrane. Only forms a complex with a lipoprotein if the residue after the N-terminal Cys is not an aspartate (The Asp acts as a targeting signal to indicate that the lipoprotein should stay in the inner membrane). The polypeptide is Outer-membrane lipoprotein carrier protein (Enterobacter sp. (strain 638)).